The chain runs to 107 residues: UPF0145 protein BH1111 (107 aa).

The protein belongs to the UPF0145 family.

This Halalkalibacterium halodurans (strain ATCC BAA-125 / DSM 18197 / FERM 7344 / JCM 9153 / C-125) (Bacillus halodurans) protein is UPF0145 protein BH1111.